We begin with the raw amino-acid sequence, 426 residues long: Putative glutamate--cysteine ligase 2 (426 aa).

Belongs to the glutamate--cysteine ligase type 2 family. YbdK subfamily.

The enzyme catalyses L-cysteine + L-glutamate + ATP = gamma-L-glutamyl-L-cysteine + ADP + phosphate + H(+). In terms of biological role, ATP-dependent carboxylate-amine ligase which exhibits weak glutamate--cysteine ligase activity. This is Putative glutamate--cysteine ligase 2 from Bradyrhizobium diazoefficiens (strain JCM 10833 / BCRC 13528 / IAM 13628 / NBRC 14792 / USDA 110).